The primary structure comprises 473 residues: Photosystem II CP43 reaction center protein (473 aa).

The propeptide occupies 1–14 (MKTLYSLRRFYHVE). The residue at position 15 (Thr-15) is an N-acetylthreonine. The residue at position 15 (Thr-15) is a Phosphothreonine. Helical transmembrane passes span 69-93 (LFEV…PHLA), 134-155 (LLGP…KDRN), 178-200 (KALY…RKIT), 255-275 (KPFA…LSYS), and 291-312 (WFNN…ASQA). Glu-367 is a [CaMn4O5] cluster binding site. A helical transmembrane segment spans residues 447–471 (RARAAAAGFEKGIDRDFEPVLSMTP).

This sequence belongs to the PsbB/PsbC family. PsbC subfamily. As to quaternary structure, PSII is composed of 1 copy each of membrane proteins PsbA, PsbB, PsbC, PsbD, PsbE, PsbF, PsbH, PsbI, PsbJ, PsbK, PsbL, PsbM, PsbT, PsbX, PsbY, PsbZ, Psb30/Ycf12, at least 3 peripheral proteins of the oxygen-evolving complex and a large number of cofactors. It forms dimeric complexes. It depends on Binds multiple chlorophylls and provides some of the ligands for the Ca-4Mn-5O cluster of the oxygen-evolving complex. It may also provide a ligand for a Cl- that is required for oxygen evolution. PSII binds additional chlorophylls, carotenoids and specific lipids. as a cofactor.

Its subcellular location is the plastid. The protein localises to the chloroplast thylakoid membrane. Its function is as follows. One of the components of the core complex of photosystem II (PSII). It binds chlorophyll and helps catalyze the primary light-induced photochemical processes of PSII. PSII is a light-driven water:plastoquinone oxidoreductase, using light energy to abstract electrons from H(2)O, generating O(2) and a proton gradient subsequently used for ATP formation. This is Photosystem II CP43 reaction center protein from Atropa belladonna (Belladonna).